A 174-amino-acid chain; its full sequence is Transcription antitermination protein NusB (174 aa).

Residues 1 to 11 (MSEVETTNDQT) show a composition bias toward polar residues. Positions 1 to 29 (MSEVETTNDQTPAPKRKDKKPSRSQLRSA) are disordered.

The protein belongs to the NusB family.

Its function is as follows. Involved in transcription antitermination. Required for transcription of ribosomal RNA (rRNA) genes. Binds specifically to the boxA antiterminator sequence of the ribosomal RNA (rrn) operons. This Marinomonas sp. (strain MWYL1) protein is Transcription antitermination protein NusB.